A 713-amino-acid chain; its full sequence is BBSome complex assembly protein BBS10 (713 aa).

This sequence belongs to the TCP-1 chaperonin family. In terms of assembly, component of a complex composed at least of MKKS, BBS10, BBS12, TCP1, CCT2, CCT3, CCT4, CCT5 and CCT8.

It is found in the cell projection. Its subcellular location is the cilium. Functionally, probable molecular chaperone that assists the folding of proteins upon ATP hydrolysis. Plays a role in the assembly of BBSome, a complex involved in ciliogenesis regulating transports vesicles to the cilia. Involved in adipogenic differentiation. The sequence is that of BBSome complex assembly protein BBS10 (Bbs10) from Mus musculus (Mouse).